Here is a 529-residue protein sequence, read N- to C-terminus: Intraflagellar transport protein 56 (529 aa).

The disordered stretch occupies residues 1-21; the sequence is MLHNRMTTAFERSKEQEHEAA. Residues 11–21 show a composition bias toward basic and acidic residues; it reads ERSKEQEHEAA. TPR repeat units lie at residues 57–90, 154–187, 189–221, 285–321, 359–392, and 428–461; these read GNADLWIAYCNFHLGRHEEALEIYTALKKSKNPP, SADQMALAAVHFLRTHYQQALECYEEVLQVQPEC, AIYMHMALCYYKLGDYLKSEEFLMLYRENAEDS, SEARQNLVKLYIEKGQYEDAYKVVQSFEPAVSAEYTL, VLGRRAMAAAYFLTGEFEEASMYLESIADIPKES, and PVHRTWLGRLLIRAQRSAEAFDLYRDAEKNSLQT.

The protein belongs to the IFT56 family.

The protein resides in the cell projection. Its subcellular location is the cilium. The protein localises to the flagellum. It localises to the cytoplasm. It is found in the cytoskeleton. The protein resides in the flagellum axoneme. Its subcellular location is the flagellum basal body. Component of the intraflagellar transport complex B (IFT-B) involved in flagellar assembly. This is Intraflagellar transport protein 56 from Giardia intestinalis (strain ATCC 50803 / WB clone C6) (Giardia lamblia).